Here is a 139-residue protein sequence, read N- to C-terminus: MIIGIGSDLIDIRRVAKVIERHGDRFLNRVFTEIERAKAERRATNEKMVVSTYAKRFAAKEACAKALGTGIRQGVWWRDMGVVNLQAGQPSMMLTGGALKRLQLLTPPGLEVRIDVSLTDDWPLAQAFVIISAAAAGKL.

Mg(2+) is bound by residues Asp8 and Glu61.

Belongs to the P-Pant transferase superfamily. AcpS family. The cofactor is Mg(2+).

It is found in the cytoplasm. The enzyme catalyses apo-[ACP] + CoA = holo-[ACP] + adenosine 3',5'-bisphosphate + H(+). In terms of biological role, transfers the 4'-phosphopantetheine moiety from coenzyme A to a Ser of acyl-carrier-protein. The chain is Holo-[acyl-carrier-protein] synthase from Nitrobacter winogradskyi (strain ATCC 25391 / DSM 10237 / CIP 104748 / NCIMB 11846 / Nb-255).